The sequence spans 188 residues: Putative ankyrin repeat protein FPV230 (188 aa).

ANK repeat units lie at residues E2–A31, K36–V65, L135–I164, and N168–C187.

This is Putative ankyrin repeat protein FPV230 from Vertebrata (FPV).